The following is a 323-amino-acid chain: G patch domain-containing protein 4 (323 aa).

4 disordered regions span residues 1-32 (MSAS…GLGR), 84-110 (GVKV…SNRN), 124-185 (PGGE…SAKL), and 197-323 (AKYG…NKSE). Composition is skewed to basic and acidic residues over residues 9 to 32 (SQGR…GLGR) and 84 to 94 (GVKVNRTKDDD). Positions 11–57 (GRRFAEQQMHKHGWTEGKGLGRRENGISEAIKVKVKCDHAGVGHNSA) constitute a G-patch domain. Residues 131 to 141 (KEPSSSESSDS) are compositionally biased toward low complexity. Acidic residues predominate over residues 252–261 (EREEEEEEES). Over residues 281 to 291 (SKKKKSKKKHR) the composition is skewed to basic residues. Over residues 294–306 (SASPQEEQVTEST) the composition is skewed to polar residues. Residues 311-323 (KPKKKKKKKNKSE) show a composition bias toward basic residues.

In Xenopus tropicalis (Western clawed frog), this protein is G patch domain-containing protein 4 (gpatch4).